The primary structure comprises 199 residues: Large ribosomal subunit protein eL13A (199 aa).

Phosphothreonine occurs at positions 144 and 152.

The protein belongs to the eukaryotic ribosomal protein eL13 family. In terms of assembly, component of the large ribosomal subunit (LSU). Mature yeast ribosomes consist of a small (40S) and a large (60S) subunit. The 40S small subunit contains 1 molecule of ribosomal RNA (18S rRNA) and 33 different proteins (encoded by 57 genes). The large 60S subunit contains 3 rRNA molecules (25S, 5.8S and 5S rRNA) and 46 different proteins (encoded by 81 genes).

It is found in the cytoplasm. Its function is as follows. Component of the ribosome, a large ribonucleoprotein complex responsible for the synthesis of proteins in the cell. The small ribosomal subunit (SSU) binds messenger RNAs (mRNAs) and translates the encoded message by selecting cognate aminoacyl-transfer RNA (tRNA) molecules. The large subunit (LSU) contains the ribosomal catalytic site termed the peptidyl transferase center (PTC), which catalyzes the formation of peptide bonds, thereby polymerizing the amino acids delivered by tRNAs into a polypeptide chain. The nascent polypeptides leave the ribosome through a tunnel in the LSU and interact with protein factors that function in enzymatic processing, targeting, and the membrane insertion of nascent chains at the exit of the ribosomal tunnel. The sequence is that of Large ribosomal subunit protein eL13A from Saccharomyces cerevisiae (strain ATCC 204508 / S288c) (Baker's yeast).